We begin with the raw amino-acid sequence, 476 residues long: Nyctalopin (476 aa).

Positions 1-18 are cleaved as a signal peptide; the sequence is MLILLLHAVVFSLPYTRA. One can recognise an LRRNT domain in the interval 19–57; the sequence is TEACLRACPAACTCSHVERGCSVRCDRAGLQRVPQEFPC. 11 LRR repeats span residues 58 to 79, 82 to 103, 106 to 128, 131 to 154, 155 to 177, 178 to 199, 202 to 223, 226 to 247, 250 to 271, 274 to 295, and 298 to 319; these read EAAS…AFGT, SLRR…AFKG, RLAE…TFAA, RLRR…AELP, ALRE…RGLA, NLTH…SLLG, RLRS…AFGD, ALED…AFRG, RLRT…WFSD, ELEL…AFQN, and GLLA…AFQP. N-linked (GlcNAc...) asparagine glycosylation occurs at Asn-92. Asn-178 carries N-linked (GlcNAc...) asparagine glycosylation. N-linked (GlcNAc...) asparagine glycosylation is present at Asn-295. Positions 331 to 383 constitute an LRRCT domain; sequence NPWRCDCQLEWLRDWMEGSGRVADVACASPGSVAGQDLSQVVFERSSDGLCVD. Asn-388, Asn-427, Asn-434, and Asn-438 each carry an N-linked (GlcNAc...) asparagine glycan.

It belongs to the small leucine-rich proteoglycan (SLRP) family. SLRP class IV subfamily. Expressed abundantly in retina with lower levels in brain, lung, spleen and testis. Not detected in kidney, heart or liver. In the retina, highest expression found in the inner nuclear layer and ganglion cell layer.

It localises to the secreted. Its subcellular location is the extracellular space. The protein localises to the extracellular matrix. The sequence is that of Nyctalopin (Nyx) from Mus musculus (Mouse).